The primary structure comprises 75 residues: MPQSSRYSDEHVERLLTELVSVLERNRTPTDLSLMVLGNMVTNLINTSISPAQRRHIADSFAHALKSSVNEDKAH.

The protein belongs to the UPF0352 family.

This chain is UPF0352 protein plu2871, found in Photorhabdus laumondii subsp. laumondii (strain DSM 15139 / CIP 105565 / TT01) (Photorhabdus luminescens subsp. laumondii).